The sequence spans 194 residues: Peptidyl-tRNA hydrolase (194 aa).

TRNA is bound at residue Y21. The active-site Proton acceptor is H26. TRNA is bound by residues Y72, N74, and N120.

Belongs to the PTH family. As to quaternary structure, monomer.

It localises to the cytoplasm. The enzyme catalyses an N-acyl-L-alpha-aminoacyl-tRNA + H2O = an N-acyl-L-amino acid + a tRNA + H(+). Its function is as follows. Hydrolyzes ribosome-free peptidyl-tRNAs (with 1 or more amino acids incorporated), which drop off the ribosome during protein synthesis, or as a result of ribosome stalling. Functionally, catalyzes the release of premature peptidyl moieties from peptidyl-tRNA molecules trapped in stalled 50S ribosomal subunits, and thus maintains levels of free tRNAs and 50S ribosomes. This chain is Peptidyl-tRNA hydrolase, found in Halorhodospira halophila (strain DSM 244 / SL1) (Ectothiorhodospira halophila (strain DSM 244 / SL1)).